A 281-amino-acid polypeptide reads, in one-letter code: UPF0273 protein PAE3143 (281 aa).

The KaiC domain occupies 4-248 (PRVRSYVPGL…YIKITGSSVR (245 aa)). 31 to 38 (GGPGTGKS) serves as a coordination point for ATP.

Belongs to the UPF0273 family.

The polypeptide is UPF0273 protein PAE3143 (Pyrobaculum aerophilum (strain ATCC 51768 / DSM 7523 / JCM 9630 / CIP 104966 / NBRC 100827 / IM2)).